Reading from the N-terminus, the 205-residue chain is G-protein coupled receptor (205 aa).

The next 5 membrane-spanning stretches (helical) occupy residues 40 to 60 (GITLTASVPMIIIVITTMILY), 71 to 91 (FYVITLFASDFVLMWCVFFMT), 107 to 127 (LVYFIYHAVCSYSISMLAIIA), 151 to 171 (IGILLLASSMCAIPTALFVQI), and 185 to 205 (LSSPKAYELFLAVKIVFSFIW). Cysteines 105 and 181 form a disulfide.

This sequence belongs to the G-protein coupled receptor 1 family.

It localises to the host membrane. The sequence is that of G-protein coupled receptor (U12) from Human herpesvirus 6B (strain Z29) (HHV-6 variant B).